The following is a 268-amino-acid chain: Zinc finger protein SNAI2 (268 aa).

Residues 1–20 form an SNAG domain region; the sequence is MPRSFLVKKHFNASKKPNYS. The tract at residues 80–117 is disordered; sequence PASLGRVSPPPPSDTSSKDHSGSESPISDEEERLQSKL. C2H2-type zinc fingers lie at residues 128 to 150, 159 to 181, 185 to 207, and 213 to 235; these read FQCN…KQLH, FSCK…IRTH, CVCK…IRTH, and FSCS…LQTH. Residues 241 to 264 form a C2H2-type 5; atypical zinc finger; the sequence is YQCKSCSKTFSRMSLLHKHEESGC.

The protein belongs to the snail C2H2-type zinc-finger protein family. In terms of assembly, interacts (via SNAG domain) with LIMD1 (via LIM domains), WTIP (via LIM domains) and AJUBA (via LIM domains). Interacts (via zinc fingers) with KPNA2, KPNB1, and TNPO1. May interact (via zinc fingers) with IPO7. Phosphorylated by GSK3B. Once phosphorylated, it becomes a target for ubiquitination. In terms of processing, ubiquitinated by the SCF(FBXO11) complex; ubiquitination requires previous GSK3B-mediated SNAI2 phosphorylation.

It localises to the nucleus. The protein resides in the cytoplasm. Transcriptional repressor that modulates both activator-dependent and basal transcription. Involved in the generation and migration of neural crest cells. Plays a role in mediating RAF1-induced transcriptional repression of the TJ protein, occludin (OCLN) and subsequent oncogenic transformation of epithelial cells. Represses BRCA2 expression by binding to its E2-box-containing silencer and recruiting CTBP1 and HDAC1 in breast cells. In epidermal keratinocytes, binds to the E-box in ITGA3 promoter and represses its transcription. Involved in the regulation of ITGB1 and ITGB4 expression and cell adhesion and proliferation in epidermal keratinocytes. Binds to E-box2 domain of BSG and activates its expression during TGFB1-induced epithelial-mesenchymal transition (EMT) in hepatocytes. Represses E-Cadherin/CDH1 transcription via E-box elements. Involved in osteoblast maturation. Binds to RUNX2 and SOC9 promoters and may act as a positive and negative transcription regulator, respectively, in osteoblasts. Binds to CXCL12 promoter via E-box regions in mesenchymal stem cells and osteoblasts. Plays an essential role in TWIST1-induced EMT and its ability to promote invasion and metastasis. This Bos taurus (Bovine) protein is Zinc finger protein SNAI2 (SNAI2).